Here is a 60-residue protein sequence, read N- to C-terminus: Sec-independent protein translocase protein TatA (60 aa).

The helical transmembrane segment at 1–21 (MTPAGPAQLLIVALVVIVLFG) threads the bilayer.

The protein belongs to the TatA/E family. As to quaternary structure, the Tat system comprises two distinct complexes: a TatABC complex, containing multiple copies of TatA, TatB and TatC subunits, and a separate TatA complex, containing only TatA subunits. Substrates initially bind to the TatABC complex, which probably triggers association of the separate TatA complex to form the active translocon.

It localises to the cell membrane. Part of the twin-arginine translocation (Tat) system that transports large folded proteins containing a characteristic twin-arginine motif in their signal peptide across membranes. TatA could form the protein-conducting channel of the Tat system. The chain is Sec-independent protein translocase protein TatA from Corynebacterium glutamicum (strain R).